The sequence spans 296 residues: Tuberculosinyl adenosine transferase (296 aa).

Belongs to the diterpene synthase family. In terms of assembly, homodimer. Requires Mg(2+) as cofactor.

It catalyses the reaction tuberculosinyl diphosphate + adenosine + H(+) = 1-tuberculosinyladenosine + diphosphate. The enzyme catalyses tuberculosinyl diphosphate + H2O = tuberculosinol + diphosphate. It carries out the reaction tuberculosinyl diphosphate + H2O = (13R)-edaxadiene + diphosphate. The catalysed reaction is tuberculosinyl diphosphate + H2O = (13S)-edaxadiene + diphosphate. Tuberculosinyl transferase that catalyzes the condensation of adenosine and tuberculosinyl diphosphate (TbPP) to generate 1-tuberculosinyladenosine (1-TbAd), which acts as an antiacid that directly protects M.tuberculosis from acid pH and physically remodels M.tuberculosis phagolysosomes. In addition, acts as a phosphatase that catalyzes the diphosphate-removal from TbPP to produce both tuberculosinol (TOH) and isotuberculosinol (iso-TOH). The polypeptide is Tuberculosinyl adenosine transferase (Mycobacterium tuberculosis (strain CDC 1551 / Oshkosh)).